The following is a 345-amino-acid chain: Cytoplasmic envelopment protein 2 (345 aa).

The tract at residues 26–35 is nuclear localization signal 1; sequence KLVGKSRKHR. Positions 55-63 are nuclear export signal; sequence CILCQLLLF. Residues 90–94 form a nuclear localization signal 2 region; that stretch reads RRRRR.

The protein belongs to the herpesviridae cytoplasmic envelopment protein 2 family. As to quaternary structure, interacts with cytoplasmic envelopment protein 3 and with the capsid. Interacts with host STING1; this interaction prevents viral DNA-triggered antiviral immune response.

The protein localises to the virion tegument. The protein resides in the host cytoplasm. It is found in the host nucleus. Its function is as follows. Plays a critical role in cytoplasmic virus egress. Participates in the final step of tegumentation and envelope acquisition within the host cytoplasm by directly interacting with the capsid. Upon virion binding to target cell, a signaling cascade is triggered to disrupt the interaction with the capsid, thereby preparing capsid uncoating. Additionally, antagonizes the viral DNA-triggered antiviral immune response by targeting host STING1 and preventing its dimerization and trafficking. This Homo sapiens (Human) protein is Cytoplasmic envelopment protein 2 (UL94).